The following is a 243-amino-acid chain: 1-(5-phosphoribosyl)-5-[(5-phosphoribosylamino)methylideneamino] imidazole-4-carboxamide isomerase (243 aa).

Aspartate 8 serves as the catalytic Proton acceptor. The Proton donor role is filled by aspartate 129.

Belongs to the HisA/HisF family.

The protein resides in the cytoplasm. The catalysed reaction is 1-(5-phospho-beta-D-ribosyl)-5-[(5-phospho-beta-D-ribosylamino)methylideneamino]imidazole-4-carboxamide = 5-[(5-phospho-1-deoxy-D-ribulos-1-ylimino)methylamino]-1-(5-phospho-beta-D-ribosyl)imidazole-4-carboxamide. It functions in the pathway amino-acid biosynthesis; L-histidine biosynthesis; L-histidine from 5-phospho-alpha-D-ribose 1-diphosphate: step 4/9. In Geobacter sp. (strain M21), this protein is 1-(5-phosphoribosyl)-5-[(5-phosphoribosylamino)methylideneamino] imidazole-4-carboxamide isomerase.